A 238-amino-acid chain; its full sequence is 1-(5-phosphoribosyl)-5-[(5-phosphoribosylamino)methylideneamino] imidazole-4-carboxamide isomerase (238 aa).

D8 acts as the Proton acceptor in catalysis. Residue D129 is the Proton donor of the active site.

This sequence belongs to the HisA/HisF family.

It localises to the cytoplasm. The enzyme catalyses 1-(5-phospho-beta-D-ribosyl)-5-[(5-phospho-beta-D-ribosylamino)methylideneamino]imidazole-4-carboxamide = 5-[(5-phospho-1-deoxy-D-ribulos-1-ylimino)methylamino]-1-(5-phospho-beta-D-ribosyl)imidazole-4-carboxamide. It functions in the pathway amino-acid biosynthesis; L-histidine biosynthesis; L-histidine from 5-phospho-alpha-D-ribose 1-diphosphate: step 4/9. The polypeptide is 1-(5-phosphoribosyl)-5-[(5-phosphoribosylamino)methylideneamino] imidazole-4-carboxamide isomerase (Paracoccus denitrificans (strain Pd 1222)).